Reading from the N-terminus, the 200-residue chain is Ribosomal RNA large subunit methyltransferase E (200 aa).

Residues Gly-49, Trp-51, Asp-69, Asp-87, and Asp-111 each contribute to the S-adenosyl-L-methionine site. Lys-151 (proton acceptor) is an active-site residue.

Belongs to the class I-like SAM-binding methyltransferase superfamily. RNA methyltransferase RlmE family.

Its subcellular location is the cytoplasm. The catalysed reaction is uridine(2552) in 23S rRNA + S-adenosyl-L-methionine = 2'-O-methyluridine(2552) in 23S rRNA + S-adenosyl-L-homocysteine + H(+). Its function is as follows. Specifically methylates the uridine in position 2552 of 23S rRNA at the 2'-O position of the ribose in the fully assembled 50S ribosomal subunit. The polypeptide is Ribosomal RNA large subunit methyltransferase E (Lawsonia intracellularis (strain PHE/MN1-00)).